Consider the following 251-residue polypeptide: uncharacterized protein (251 aa).

The N-terminal stretch at 1–18 is a signal peptide; the sequence is MRILIILSIILCSLFARA.

The protein belongs to the MlaA family.

This is an uncharacterized protein from Rickettsia felis (strain ATCC VR-1525 / URRWXCal2) (Rickettsia azadi).